The sequence spans 103 residues: Large ribosomal subunit protein bL21 (103 aa).

A compositionally biased stretch (basic residues) spans Tyr83 to Pro92. A disordered region spans residues Tyr83–Ala103.

It belongs to the bacterial ribosomal protein bL21 family. In terms of assembly, part of the 50S ribosomal subunit. Contacts protein L20.

Functionally, this protein binds to 23S rRNA in the presence of protein L20. This is Large ribosomal subunit protein bL21 from Pelotomaculum thermopropionicum (strain DSM 13744 / JCM 10971 / SI).